A 296-amino-acid polypeptide reads, in one-letter code: Polyamine aminopropyltransferase (296 aa).

Residues 16 to 251 form the PABS domain; it reads HLWYFEYYTG…GMWSYTFASK (236 aa). Position 46 (Gln-46) interacts with S-methyl-5'-thioadenosine. Spermidine is bound by residues His-77 and Asp-101. S-methyl-5'-thioadenosine contacts are provided by residues Glu-121 and 152–153; that span reads NG. Asp-170 functions as the Proton acceptor in the catalytic mechanism. Residue 170–173 coordinates spermidine; it reads DSTD.

This sequence belongs to the spermidine/spermine synthase family. In terms of assembly, homodimer or homotetramer.

It localises to the cytoplasm. The enzyme catalyses S-adenosyl 3-(methylsulfanyl)propylamine + putrescine = S-methyl-5'-thioadenosine + spermidine + H(+). It functions in the pathway amine and polyamine biosynthesis; spermidine biosynthesis; spermidine from putrescine: step 1/1. Catalyzes the irreversible transfer of a propylamine group from the amino donor S-adenosylmethioninamine (decarboxy-AdoMet) to putrescine (1,4-diaminobutane) to yield spermidine. This chain is Polyamine aminopropyltransferase, found in Thermotoga neapolitana (strain ATCC 49049 / DSM 4359 / NBRC 107923 / NS-E).